Consider the following 251-residue polypeptide: uncharacterized protein (251 aa).

The tract at residues methionine 1–proline 22 is disordered.

This is an uncharacterized protein from Homo sapiens (Human).